We begin with the raw amino-acid sequence, 931 residues long: DNA mismatch repair protein MutS (931 aa).

Over residues 1 to 10 the composition is skewed to low complexity; sequence MMDDTAMPAR. Positions 1–34 are disordered; sequence MMDDTAMPARAEADAAEDELAAPAGIDRTAKADK. Residue 674 to 681 participates in ATP binding; sequence GPNMAGKS.

Belongs to the DNA mismatch repair MutS family.

In terms of biological role, this protein is involved in the repair of mismatches in DNA. It is possible that it carries out the mismatch recognition step. This protein has a weak ATPase activity. This Azorhizobium caulinodans (strain ATCC 43989 / DSM 5975 / JCM 20966 / LMG 6465 / NBRC 14845 / NCIMB 13405 / ORS 571) protein is DNA mismatch repair protein MutS.